Consider the following 90-residue polypeptide: Probable Fe(2+)-trafficking protein (90 aa).

It belongs to the Fe(2+)-trafficking protein family.

Could be a mediator in iron transactions between iron acquisition and iron-requiring processes, such as synthesis and/or repair of Fe-S clusters in biosynthetic enzymes. This is Probable Fe(2+)-trafficking protein from Actinobacillus succinogenes (strain ATCC 55618 / DSM 22257 / CCUG 43843 / 130Z).